A 311-amino-acid polypeptide reads, in one-letter code: Methionyl-tRNA formyltransferase (311 aa).

109-112 (SLLP) provides a ligand contact to (6S)-5,6,7,8-tetrahydrofolate.

The protein belongs to the Fmt family.

It catalyses the reaction L-methionyl-tRNA(fMet) + (6R)-10-formyltetrahydrofolate = N-formyl-L-methionyl-tRNA(fMet) + (6S)-5,6,7,8-tetrahydrofolate + H(+). Functionally, attaches a formyl group to the free amino group of methionyl-tRNA(fMet). The formyl group appears to play a dual role in the initiator identity of N-formylmethionyl-tRNA by promoting its recognition by IF2 and preventing the misappropriation of this tRNA by the elongation apparatus. This Kosmotoga olearia (strain ATCC BAA-1733 / DSM 21960 / TBF 19.5.1) protein is Methionyl-tRNA formyltransferase.